Here is a 452-residue protein sequence, read N- to C-terminus: Adenylosuccinate synthetase isozyme 1 (452 aa).

A disordered region spans residues 1–22 (MSGTRASNDRSSHPGGHKRPRY). GTP contacts are provided by residues 37–43 (GDEGKGK) and 65–67 (GHT). The active-site Proton acceptor is the aspartate 38. Residues aspartate 38 and glycine 65 each contribute to the Mg(2+) site. Aspartate 38 contributes to the substrate binding site. IMP contacts are provided by residues 38-41 (DEGK), 63-66 (NAGH), threonine 158, arginine 172, asparagine 251, threonine 266, and arginine 330. The active-site Proton donor is the histidine 66. A substrate-binding site is contributed by 326 to 332 (VTTGRKR). GTP contacts are provided by residues arginine 332, 358 to 360 (KLD), and 440 to 443 (GVGK).

It belongs to the adenylosuccinate synthetase family. In terms of assembly, homodimer. It depends on Mg(2+) as a cofactor.

The protein resides in the cytoplasm. The catalysed reaction is IMP + L-aspartate + GTP = N(6)-(1,2-dicarboxyethyl)-AMP + GDP + phosphate + 2 H(+). It participates in purine metabolism; AMP biosynthesis via de novo pathway; AMP from IMP: step 1/2. Its function is as follows. Component of the purine nucleotide cycle (PNC), which interconverts IMP and AMP to regulate the nucleotide levels in various tissues, and which contributes to glycolysis and ammoniagenesis. Catalyzes the first committed step in the biosynthesis of AMP from IMP. This is Adenylosuccinate synthetase isozyme 1 (adss1) from Xenopus tropicalis (Western clawed frog).